Consider the following 144-residue polypeptide: Na(+)/H(+) antiporter subunit B (144 aa).

Helical transmembrane passes span 9–31 (VLLHTLTRVVTFIILAFSVYLFF), 41–58 (FIGGLMTASALLLMYLGF), 75–97 (IAFGLLIAIFTGFGGLLVGDPYL), and 117–139 (ALPFDLGIYLVVIGIALTIILTI).

The protein belongs to the CPA3 antiporters (TC 2.A.63) subunit B family. In terms of assembly, forms a heterooligomeric complex that consists of seven subunits: MrpA, MrpB, MrpC, MrpD, MrpE, MrpF and MrpG.

Its subcellular location is the cell membrane. In terms of biological role, mnh complex is a Na(+)Li(+)/H(+) antiporter involved in Na(+) and/or Li(+) excretion and Na(+) resistance. Na(+)/H(+) antiport consumes a transmembrane electrical potential, and is thus inferred to be electrogenic. Does not transport K(+), Ca(2+) or Mg(2+). This is Na(+)/H(+) antiporter subunit B (mrpB) from Alkalihalophilus pseudofirmus (strain ATCC BAA-2126 / JCM 17055 / OF4) (Bacillus pseudofirmus).